The sequence spans 283 residues: UPF0276 protein Nmul_A2550 (283 aa).

This sequence belongs to the UPF0276 family.

In Nitrosospira multiformis (strain ATCC 25196 / NCIMB 11849 / C 71), this protein is UPF0276 protein Nmul_A2550.